The chain runs to 153 residues: Myosin regulatory light chain, smooth muscle (153 aa).

3 EF-hand domains span residues 12–47, 81–116, and 117–152; these read SQIQ…LGRG, DPEE…QADR, and FSQS…GQEE. Residues aspartate 25, asparagine 27, aspartate 29, and aspartate 36 each contribute to the Ca(2+) site.

Functionally, in molluscan muscle, calcium regulation is associated with myosin rather than with actin. Muscle myosin contains two types of light chains: the catalytic light chain, essential for ATPase activity, and the regulatory light chain, a calcium-binding protein responsible for Ca(2+) dependent binding and Ca(2+) dependent Mg-ATPase activity. In Halocynthia roretzi (Sea squirt), this protein is Myosin regulatory light chain, smooth muscle.